We begin with the raw amino-acid sequence, 257 residues long: Capsid protein (257 aa).

This sequence belongs to the geminiviridae capsid protein family.

The protein localises to the virion. Encapsidates the viral DNA into characteristic twinned ('geminate') particles. Plays a role in protection of the genome from degradation, virus acquisition and transmission by insect vectors, infectivity, and systemic movement. This Capsicum annuum (Capsicum pepper) protein is Capsid protein.